The sequence spans 201 residues: 3-isopropylmalate dehydratase small subunit (201 aa).

This sequence belongs to the LeuD family. LeuD type 1 subfamily. As to quaternary structure, heterodimer of LeuC and LeuD.

It carries out the reaction (2R,3S)-3-isopropylmalate = (2S)-2-isopropylmalate. Its pathway is amino-acid biosynthesis; L-leucine biosynthesis; L-leucine from 3-methyl-2-oxobutanoate: step 2/4. Its function is as follows. Catalyzes the isomerization between 2-isopropylmalate and 3-isopropylmalate, via the formation of 2-isopropylmaleate. In Salmonella paratyphi A (strain ATCC 9150 / SARB42), this protein is 3-isopropylmalate dehydratase small subunit.